The chain runs to 304 residues: Large ribosomal subunit protein uL2m (304 aa).

Residues 1–60 (MALCALASALRSLSLASPAITARVPTLLPVGQSNVLLQLPSALALPAHRPVHMSADRSAK) constitute a mitochondrion transit peptide.

This sequence belongs to the universal ribosomal protein uL2 family. Component of the mitochondrial ribosome large subunit (39S) which comprises a 16S rRNA and about 50 distinct proteins.

The protein localises to the mitochondrion. The chain is Large ribosomal subunit protein uL2m (Mrpl2) from Rattus norvegicus (Rat).